The following is a 518-amino-acid chain: Bifunctional purine biosynthesis protein PurH (518 aa).

Residues 1–146 (MARIALISVS…KNHESVSILT (146 aa)) form the MGS-like domain.

This sequence belongs to the PurH family.

It catalyses the reaction (6R)-10-formyltetrahydrofolate + 5-amino-1-(5-phospho-beta-D-ribosyl)imidazole-4-carboxamide = 5-formamido-1-(5-phospho-D-ribosyl)imidazole-4-carboxamide + (6S)-5,6,7,8-tetrahydrofolate. It carries out the reaction IMP + H2O = 5-formamido-1-(5-phospho-D-ribosyl)imidazole-4-carboxamide. The protein operates within purine metabolism; IMP biosynthesis via de novo pathway; 5-formamido-1-(5-phospho-D-ribosyl)imidazole-4-carboxamide from 5-amino-1-(5-phospho-D-ribosyl)imidazole-4-carboxamide (10-formyl THF route): step 1/1. Its pathway is purine metabolism; IMP biosynthesis via de novo pathway; IMP from 5-formamido-1-(5-phospho-D-ribosyl)imidazole-4-carboxamide: step 1/1. The sequence is that of Bifunctional purine biosynthesis protein PurH from Prochlorococcus marinus (strain MIT 9211).